Consider the following 251-residue polypeptide: Imidazole glycerol phosphate synthase subunit HisF (251 aa).

Catalysis depends on residues aspartate 12 and aspartate 131.

This sequence belongs to the HisA/HisF family. Heterodimer of HisH and HisF.

The protein resides in the cytoplasm. The enzyme catalyses 5-[(5-phospho-1-deoxy-D-ribulos-1-ylimino)methylamino]-1-(5-phospho-beta-D-ribosyl)imidazole-4-carboxamide + L-glutamine = D-erythro-1-(imidazol-4-yl)glycerol 3-phosphate + 5-amino-1-(5-phospho-beta-D-ribosyl)imidazole-4-carboxamide + L-glutamate + H(+). It participates in amino-acid biosynthesis; L-histidine biosynthesis; L-histidine from 5-phospho-alpha-D-ribose 1-diphosphate: step 5/9. Functionally, IGPS catalyzes the conversion of PRFAR and glutamine to IGP, AICAR and glutamate. The HisF subunit catalyzes the cyclization activity that produces IGP and AICAR from PRFAR using the ammonia provided by the HisH subunit. This is Imidazole glycerol phosphate synthase subunit HisF from Streptomyces avermitilis (strain ATCC 31267 / DSM 46492 / JCM 5070 / NBRC 14893 / NCIMB 12804 / NRRL 8165 / MA-4680).